The primary structure comprises 709 residues: D-(-)-3-hydroxybutyrate oligomer hydrolase (709 aa).

A signal peptide spans 1 to 26 (MTVFKTAPLLIAALAASSCGGGGSGA). Residues 58-77 (GLGRSGLQDDSPPGYAGSQP) are disordered. The active-site Charge relay system is the Ser-305.

Belongs to the D-(-)-3-hydroxybutyrate oligomer hydrolase family.

Its subcellular location is the secreted. The enzyme catalyses (3R)-hydroxybutanoate dimer + H2O = 2 (R)-3-hydroxybutanoate + H(+). The protein operates within lipid metabolism; butanoate metabolism. Its function is as follows. Participates in the degradation of poly-3-hydroxybutyrate (PHB). It works downstream of poly(3-hydroxybutyrate) depolymerase, hydrolyzing D(-)-3-hydroxybutyrate oligomers of various length (3HB-oligomers) into 3HB-monomers. The protein is D-(-)-3-hydroxybutyrate oligomer hydrolase of Paracidovorax citrulli (strain AAC00-1) (Acidovorax citrulli).